The chain runs to 350 residues: Major allergen Mal f 1 (350 aa).

A signal peptide spans 1–22; that stretch reads MRYSTVLAALALLGTSAVSVLA.

The protein resides in the secreted. Its subcellular location is the cell wall. This chain is Major allergen Mal f 1, found in Malassezia furfur (Pityriasis versicolor infection agent).